The chain runs to 529 residues: Zinc finger protein 572 (529 aa).

The tract at residues 1-125 (MEQEQKLLVS…TGPAGQQNPS (125 aa)) is disordered. A Glycyl lysine isopeptide (Lys-Gly) (interchain with G-Cter in SUMO2) cross-link involves residue Lys6. Residues 22–42 (KNTITGDESKNNLKTVQFSNS) show a composition bias toward polar residues. A compositionally biased stretch (basic and acidic residues) spans 43-68 (KADKERASKWSRSDGPENYKDEDTKE). Residues 87–96 (NDSNLGSQRN) are compositionally biased toward polar residues. 12 C2H2-type zinc fingers span residues 131–153 (YKCS…QRTH), 159–181 (YRCS…LRTH), 187–209 (YQCG…ERTH), 215–237 (YKCP…HRSH), 243–265 (YECP…QRTH), 271–293 (YKCP…QRTH), 299–321 (YKCP…QRIH), 327–349 (YQCI…QKMH), 383–405 (YKCC…QRTH), 411–433 (YRCS…QRTH), 439–461 (YKCP…RRTH), and 467–489 (YKCT…RKIH).

The protein belongs to the krueppel C2H2-type zinc-finger protein family.

It is found in the nucleus. May be involved in transcriptional regulation. The protein is Zinc finger protein 572 (ZNF572) of Bos taurus (Bovine).